The following is a 199-amino-acid chain: Dephospho-CoA kinase (199 aa).

The DPCK domain maps to 3 to 199 (ILGLTGSIGM…EVVKMPQRRA (197 aa)). 11 to 16 (GMGKST) serves as a coordination point for ATP.

Belongs to the CoaE family.

Its subcellular location is the cytoplasm. It carries out the reaction 3'-dephospho-CoA + ATP = ADP + CoA + H(+). Its pathway is cofactor biosynthesis; coenzyme A biosynthesis; CoA from (R)-pantothenate: step 5/5. Its function is as follows. Catalyzes the phosphorylation of the 3'-hydroxyl group of dephosphocoenzyme A to form coenzyme A. The sequence is that of Dephospho-CoA kinase from Bradyrhizobium diazoefficiens (strain JCM 10833 / BCRC 13528 / IAM 13628 / NBRC 14792 / USDA 110).